A 415-amino-acid polypeptide reads, in one-letter code: Multidrug resistance protein MdtA (415 aa).

An N-terminal signal peptide occupies residues 1-21; the sequence is MKGSYKSRWVIVIVVVIAAIA. 2 disordered regions span residues 32-59 and 392-415; these read SRSA…SGPL and EAQS…GARS. The span at 399–415 shows a compositional bias: basic and acidic residues; it reads SEEKATSREYAKKGARS.

The protein belongs to the membrane fusion protein (MFP) (TC 8.A.1) family. As to quaternary structure, part of a tripartite efflux system composed of MdtA, MdtB and MdtC.

The protein resides in the cell inner membrane. Its function is as follows. The MdtABC tripartite complex confers resistance against novobiocin and deoxycholate. This is Multidrug resistance protein MdtA from Escherichia coli O17:K52:H18 (strain UMN026 / ExPEC).